Consider the following 652-residue polypeptide: Interferon-induced GTP-binding protein Mx1 (652 aa).

Positions M1–E27 are disordered. The region spanning D58 to P331 is the Dynamin-type G domain. Positions G68–S75 are G1 motif. G68 to S75 is a GTP binding site. The G2 motif stretch occupies residues V93–R95. The interval D169 to G172 is G3 motif. Residues D169 to I173 and T238 to D241 contribute to the GTP site. The interval T238–D241 is G4 motif. The interval K270–G273 is G5 motif. Residues I332 to E357 form a bundle signaling element (BSE) region. Residues E357 to C526 form a middle domain region. The stalk stretch occupies residues D358–E622. The 89-residue stretch at T564 to N652 folds into the GED domain.

Belongs to the TRAFAC class dynamin-like GTPase superfamily. Dynamin/Fzo/YdjA family. In terms of assembly, homooligomer. Oligomerizes into multimeric filamentous or ring-like structures by virtue of its stalk domain. Oligomerization is critical for GTPase activity, protein stability, and recognition of viral target structures. Interacts with TRPC1, TRPC3, TRPC4, TRPC5, TRPC6 and TRPC7. Interacts with HSPA5. Interacts with TUBB/TUBB5. Interacts with DDX39A and DDX39B. ISGylated.

It localises to the nucleus. The protein localises to the cytoplasm. It is found in the endoplasmic reticulum membrane. Its subcellular location is the perinuclear region. In terms of biological role, interferon-induced dynamin-like GTPase which has antiviral activity against influenza A virus, (IAV) and Thogoto virus (THOV). Inhibits IAV by interfering with the process of primary transcription, probably by affecting the viral polymerase function. The sequence is that of Interferon-induced GTP-binding protein Mx1 (Mx1) from Rattus norvegicus (Rat).